Reading from the N-terminus, the 180-residue chain is Acireductone dioxygenase (180 aa).

Residues histidine 97, histidine 99, glutamate 103, and histidine 141 each contribute to the Fe(2+) site. Residues histidine 97, histidine 99, glutamate 103, and histidine 141 each coordinate Ni(2+).

This sequence belongs to the acireductone dioxygenase (ARD) family. In terms of assembly, monomer. Fe(2+) is required as a cofactor. Requires Ni(2+) as cofactor.

It carries out the reaction 1,2-dihydroxy-5-(methylsulfanyl)pent-1-en-3-one + O2 = 3-(methylsulfanyl)propanoate + CO + formate + 2 H(+). It catalyses the reaction 1,2-dihydroxy-5-(methylsulfanyl)pent-1-en-3-one + O2 = 4-methylsulfanyl-2-oxobutanoate + formate + 2 H(+). The protein operates within amino-acid biosynthesis; L-methionine biosynthesis via salvage pathway; L-methionine from S-methyl-5-thio-alpha-D-ribose 1-phosphate: step 5/6. Functionally, catalyzes 2 different reactions between oxygen and the acireductone 1,2-dihydroxy-3-keto-5-methylthiopentene (DHK-MTPene) depending upon the metal bound in the active site. Fe-containing acireductone dioxygenase (Fe-ARD) produces formate and 2-keto-4-methylthiobutyrate (KMTB), the alpha-ketoacid precursor of methionine in the methionine recycle pathway. Ni-containing acireductone dioxygenase (Ni-ARD) produces methylthiopropionate, carbon monoxide and formate, and does not lie on the methionine recycle pathway. This Yersinia pseudotuberculosis serotype O:3 (strain YPIII) protein is Acireductone dioxygenase.